A 488-amino-acid chain; its full sequence is Protein nucleotidyltransferase YdiU (488 aa).

Residues glycine 91, glycine 93, arginine 94, lysine 114, aspartate 126, glycine 127, arginine 177, and arginine 184 each contribute to the ATP site. Residue aspartate 253 is the Proton acceptor of the active site. Mg(2+)-binding residues include asparagine 254 and aspartate 263. Aspartate 263 serves as a coordination point for ATP.

It belongs to the SELO family. The cofactor is Mg(2+). Requires Mn(2+) as cofactor.

It carries out the reaction L-seryl-[protein] + ATP = 3-O-(5'-adenylyl)-L-seryl-[protein] + diphosphate. The catalysed reaction is L-threonyl-[protein] + ATP = 3-O-(5'-adenylyl)-L-threonyl-[protein] + diphosphate. It catalyses the reaction L-tyrosyl-[protein] + ATP = O-(5'-adenylyl)-L-tyrosyl-[protein] + diphosphate. The enzyme catalyses L-histidyl-[protein] + UTP = N(tele)-(5'-uridylyl)-L-histidyl-[protein] + diphosphate. It carries out the reaction L-seryl-[protein] + UTP = O-(5'-uridylyl)-L-seryl-[protein] + diphosphate. The catalysed reaction is L-tyrosyl-[protein] + UTP = O-(5'-uridylyl)-L-tyrosyl-[protein] + diphosphate. Nucleotidyltransferase involved in the post-translational modification of proteins. It can catalyze the addition of adenosine monophosphate (AMP) or uridine monophosphate (UMP) to a protein, resulting in modifications known as AMPylation and UMPylation. The sequence is that of Protein nucleotidyltransferase YdiU from Bacillus thuringiensis (strain Al Hakam).